The chain runs to 573 residues: 60 kDa heat shock protein, mitochondrial (573 aa).

The N-terminal 26 residues, 1–26, are a transit peptide targeting the mitochondrion; it reads MLRLPTVFRQMRPVSRVLAPHLTRAY. Lys31 is subject to N6-succinyllysine. Phosphoserine occurs at positions 67 and 70. ATP is bound at residue Lys75. Lys75 carries the post-translational modification N6-acetyllysine. Residue Lys82 is modified to N6-acetyllysine; alternate. Residue Lys82 is modified to N6-succinyllysine; alternate. Lys87 is modified (N6-acetyllysine). Tyr90 bears the Phosphotyrosine mark. Lys91 is subject to N6-acetyllysine. Position 111 to 115 (111 to 115) interacts with ATP; sequence DGTTT. An N6-acetyllysine; alternate modification is found at Lys125. Lys125 is subject to N6-succinyllysine; alternate. N6-acetyllysine is present on Lys130. N6-acetyllysine; alternate is present on Lys133. At Lys133 the chain carries N6-succinyllysine; alternate. Lys133 carries the N6-malonyllysine; alternate modification. Lys156 is subject to N6-acetyllysine. N6-acetyllysine; alternate occurs at positions 191, 202, 205, 218, and 236. Residues Lys191, Lys202, Lys205, Lys218, and Lys236 each carry the N6-succinyllysine; alternate modification. N6-acetyllysine is present on Lys249. Lys250 is subject to N6-acetyllysine; alternate. Lys250 is modified (N6-succinyllysine; alternate). N6-acetyllysine occurs at positions 269 and 292. Lys301 is modified (N6-succinyllysine). Lys314 is modified (N6-acetyllysine). The residue at position 352 (Lys352) is an N6-acetyllysine; alternate. Position 352 is an N6-succinyllysine; alternate (Lys352). Lys389 bears the N6-acetyllysine mark. Lys396 carries the post-translational modification N6-acetyllysine; alternate. Residue Lys396 is modified to N6-succinyllysine; alternate. Ser410 is modified (phosphoserine). Gly440 provides a ligand contact to ATP. Position 469 is an N6-acetyllysine (Lys469). Residue Lys481 is modified to N6-acetyllysine; alternate. The residue at position 481 (Lys481) is an N6-succinyllysine; alternate. Ser488 carries the post-translational modification Phosphoserine. Asp520 provides a ligand contact to ATP. Lys551 is covalently cross-linked (Glycyl lysine isopeptide (Lys-Gly) (interchain with G-Cter in SUMO2)).

The protein belongs to the chaperonin (HSP60) family. In terms of assembly, homoheptamer arranged in a ring structure. The functional units of these chaperonins consist of heptameric rings of the large subunit Hsp60, which function as a back-to-back double ring. Interacts with 2 heptameric Hsp10 rings to form the symmetrical football complex. Interacts with HRAS. Interacts with ATAD3A. Interacts with ETFBKMT and EEF1AKMT3. Interacts with MFHAS1.

It is found in the mitochondrion matrix. It catalyses the reaction ATP + H2O + a folded polypeptide = ADP + phosphate + an unfolded polypeptide.. Functionally, chaperonin implicated in mitochondrial protein import and macromolecular assembly. Together with Hsp10, facilitates the correct folding of imported proteins. May also prevent misfolding and promote the refolding and proper assembly of unfolded polypeptides generated under stress conditions in the mitochondrial matrix. The functional units of these chaperonins consist of heptameric rings of the large subunit Hsp60, which function as a back-to-back double ring. In a cyclic reaction, Hsp60 ring complexes bind one unfolded substrate protein per ring, followed by the binding of ATP and association with 2 heptameric rings of the co-chaperonin Hsp10. This leads to sequestration of the substrate protein in the inner cavity of Hsp60 where, for a certain period of time, it can fold undisturbed by other cell components. Synchronous hydrolysis of ATP in all Hsp60 subunits results in the dissociation of the chaperonin rings and the release of ADP and the folded substrate protein. This Pongo abelii (Sumatran orangutan) protein is 60 kDa heat shock protein, mitochondrial (HSPD1).